Reading from the N-terminus, the 159-residue chain is 3-hydroxyacyl-[acyl-carrier-protein] dehydratase FabZ (159 aa).

H62 is an active-site residue.

The protein belongs to the thioester dehydratase family. FabZ subfamily.

Its subcellular location is the cytoplasm. It catalyses the reaction a (3R)-hydroxyacyl-[ACP] = a (2E)-enoyl-[ACP] + H2O. In terms of biological role, involved in unsaturated fatty acids biosynthesis. Catalyzes the dehydration of short chain beta-hydroxyacyl-ACPs and long chain saturated and unsaturated beta-hydroxyacyl-ACPs. This is 3-hydroxyacyl-[acyl-carrier-protein] dehydratase FabZ from Methylobacterium nodulans (strain LMG 21967 / CNCM I-2342 / ORS 2060).